Consider the following 103-residue polypeptide: Large ribosomal subunit protein eL14 (103 aa).

The protein belongs to the eukaryotic ribosomal protein eL14 family.

This Pyrobaculum calidifontis (strain DSM 21063 / JCM 11548 / VA1) protein is Large ribosomal subunit protein eL14.